Consider the following 222-residue polypeptide: Charged multivesicular body protein 3 (222 aa).

A lipid anchor (N-myristoyl glycine) is attached at G2. Positions 2–113 (GLFGKTQEKP…LQKSTEVMKA (112 aa)) are intramolecular interaction with C-terminus. The stretch at 22–54 (KIRKEMRVVDRQIRDIQREEEKVKRSVKDAAKK) forms a coiled coil. Important for autoinhibitory function regions lie at residues 59-64 (VCVVLA) and 168-169 (IL). The stretch at 141–222 (EEMLEDTFES…MQSRLATLRS (82 aa)) forms a coiled coil. Positions 151 to 220 (MDDQEEMEEE…EAMQSRLATL (70 aa)) are intramolecular interaction with N-terminus. The segment at 151–222 (MDDQEEMEEE…MQSRLATLRS (72 aa)) is interaction with VPS4A. Residue K179 forms a Glycyl lysine isopeptide (Lys-Gly) (interchain with G-Cter in ubiquitin) linkage. The tract at residues 180–222 (APSKVTDALPEPEPSGAMAASEDEEEEEEALEAMQSRLATLRS) is disordered. 3 interaction with STAMBP regions span residues 196–222 (AMAA…TLRS), 203–207 (EEEEE), and 221–222 (RS). S200 is modified (phosphoserine). The span at 200-210 (SEDEEEEEEAL) shows a compositional bias: acidic residues. The MIT-interacting motif motif lies at 201–211 (EDEEEEEEALE).

The protein belongs to the SNF7 family. Probable core component of the endosomal sorting required for transport complex III (ESCRT-III). ESCRT-III components are thought to multimerize to form a flat lattice on the perimeter membrane of the endosome. Several assembly forms of ESCRT-III may exist that interact and act sequentially. Forms a metastable monomer in solution; its core structure (without part of the putative autoinhibitory C-terminal acidic region) oligomerizes into a flat lattice via two different dimerization interfaces. In vitro, heteromerizes with CHMP2A (but not CHMP4) to form helical tubular structures that expose membrane-interacting sites on the outside whereas VPS4B can associate on the inside of the tubule. May interact with IGFBP7; the relevance of such interaction however remains unclear. Interacts with CHMP2A. Interacts with CHMP4A; the interaction requires the release of CHMP4A autoinhibition. Interacts with VPS4A. Interacts with STAMBP; the interaction appears to relieve the autoinhibition of CHMP3. Interacts with VTA1.

The protein localises to the cytoplasm. It localises to the cytosol. Its subcellular location is the membrane. The protein resides in the endosome. It is found in the late endosome membrane. Its function is as follows. Probable core component of the endosomal sorting required for transport complex III (ESCRT-III) which is involved in multivesicular bodies (MVBs) formation and sorting of endosomal cargo proteins into MVBs. MVBs contain intraluminal vesicles (ILVs) that are generated by invagination and scission from the limiting membrane of the endosome and mostly are delivered to lysosomes enabling degradation of membrane proteins, such as stimulated growth factor receptors, lysosomal enzymes and lipids. The MVB pathway appears to require the sequential function of ESCRT-O, -I,-II and -III complexes. ESCRT-III proteins mostly dissociate from the invaginating membrane before the ILV is released. The ESCRT machinery also functions in topologically equivalent membrane fission events, such as the terminal stages of cytokinesis and the budding of enveloped viruses (lentiviruses). ESCRT-III proteins are believed to mediate the necessary vesicle extrusion and/or membrane fission activities, possibly in conjunction with the AAA ATPase VPS4. Selectively binds to phosphatidylinositol 3,5-bisphosphate PtdIns(3,5)P2 and PtdIns(3,4)P2 in preference to other phosphoinositides tested. Involved in late stages of cytokinesis. Plays a role in endosomal sorting/trafficking of EGF receptor. The sequence is that of Charged multivesicular body protein 3 (CHMP3) from Pongo abelii (Sumatran orangutan).